A 176-amino-acid polypeptide reads, in one-letter code: Insulin-like growth factor 1 (176 aa).

A b region spans residues 45–73 (GPETLCGAELVDTLQFVCGERGFYFSKPT). Disulfide bonds link C50/C92, C62/C105, and C91/C96. The tract at residues 74–85 (GYGPSSRRSHNR) is c. Residues 86–106 (GIVDECCFQSCELRRLEMYCA) form an a region. A d region spans residues 107–114 (PVKSGKAA). Residues 115–176 (RSVRAQRHTD…GNTGGRNYRM (62 aa)) constitute a propeptide, e peptide. Residues 115-176 (RSVRAQRHTD…GNTGGRNYRM (62 aa)) form a disordered region. The span at 140–161 (RGTERRTAQHPDKTKPKKEVHQ) shows a compositional bias: basic and acidic residues.

This sequence belongs to the insulin family.

Its subcellular location is the secreted. The insulin-like growth factors, isolated from plasma, are structurally and functionally related to insulin but have a much higher growth-promoting activity. Acts as a ligand for IGF1R. Binds to the alpha subunit of IGF1R, leading to the activation of the intrinsic tyrosine kinase activity which autophosphorylates tyrosine residues in the beta subunit thus initiatiating a cascade of down-stream signaling events leading to activation of the PI3K-AKT/PKB and the Ras-MAPK pathways. Binds to integrins. Its binding to integrins and subsequent ternary complex formation with integrins and IGFR1 are essential for IGF1 signaling. In Oncorhynchus mykiss (Rainbow trout), this protein is Insulin-like growth factor 1.